The sequence spans 326 residues: D-allose transport system permease protein AlsC (326 aa).

Topologically, residues 1 to 18 are cytoplasmic; that stretch reads MGFTTRVKSEASEKKPFN. A helical transmembrane segment spans residues 19–39; the sequence is FALFWDKYGTFFILAIIVAIF. Over 40-70 the chain is Periplasmic; it reads GSLSPEYFLTTNNITQIFVQSSVTVLIGMGE. The helical transmembrane segment at 71-91 threads the bilayer; that stretch reads FFAILVAGIDLSVGAILALSG. Topologically, residues 92–101 are cytoplasmic; sequence MVTAKLMLAG. A helical transmembrane segment spans residues 102-122; the sequence is VDPFLAAMIGGVLVGGALGAI. At 123–124 the chain is on the periplasmic side; the sequence is NG. The helical transmembrane segment at 125–145 threads the bilayer; it reads CLVNWTGLHPFIITLGTNAIF. Residues 146-149 are Cytoplasmic-facing; it reads RGIT. The helical transmembrane segment at 150-170 threads the bilayer; that stretch reads LVISDANSVYGFSFDFVNFFA. Over 171–172 the chain is Periplasmic; sequence AS. Residues 173 to 193 traverse the membrane as a helical segment; that stretch reads VIGIPVPVIFSLIVALILWFL. Topologically, residues 194 to 221 are cytoplasmic; sequence TTRMRLGRNIYALGGNKNSAFYSGIDVK. Residues 222–242 traverse the membrane as a helical segment; that stretch reads FHILVVFIISGVCAGLAGVVS. The Periplasmic portion of the chain corresponds to 243–252; the sequence is TARLGAAEPL. The helical transmembrane segment at 253 to 273 threads the bilayer; the sequence is AGMGFETYAIASAIIGGTSFF. Residues 274-278 are Cytoplasmic-facing; the sequence is GGKGR. A run of 2 helical transmembrane segments spans residues 279-299 and 300-320; these read IFSV…LNIL and QVQT…AVAL. At 321–326 the chain is on the cytoplasmic side; it reads DRLISK.

This sequence belongs to the binding-protein-dependent transport system permease family. AraH/RbsC subfamily.

The protein resides in the cell inner membrane. In terms of biological role, part of the binding-protein-dependent transport system AlsBAC for D-allose; probably responsible for the translocation of the substrate across the membrane. The chain is D-allose transport system permease protein AlsC (alsC) from Escherichia coli (strain K12).